The primary structure comprises 541 residues: Atlastin-3 (541 aa).

A disordered region spans residues 1–22 (MLSPQRTAAVASRGAGDAMENG). An N-terminal hypervariable region (HVR) region spans residues 1-25 (MLSPQRTAAVASRGAGDAMENGKPG). At 1–445 (MLSPQRTAAV…NVFSTFRTPA (445 aa)) the chain is on the cytoplasmic side. One can recognise a GB1/RHD3-type G domain in the interval 57–306 (DLDVVVVSVA…LIPYVLNPSK (250 aa)). R70, K71, G72, K73, S74, F75, and R109 together coordinate GDP. Position 142 (D142) interacts with Mg(2+). GDP contacts are provided by R213, D214, V272, and S275. The tract at residues 344–434 (MLQATAANNL…YENFCKHNGS (91 aa)) is 3HB (three-helix bundle) domain. The residue at position 391 (K391) is an N6-acetyllysine. Residues 446–466 (VLFTGIAVLYIASGLTGFIGL) form a helical membrane-spanning segment. A topological domain (lumenal) is located at residue E467. Residues 468-488 (VVAQLFNCMVGLLLIALLTWG) traverse the membrane as a helical segment. The Cytoplasmic portion of the chain corresponds to 489–541 (YIRYSGQYLELGGAIDSGAAYVLEQASSHIGNSTQAAVRDAIAGRPPADKKSQ).

It belongs to the TRAFAC class dynamin-like GTPase superfamily. GB1/RHD3 GTPase family. GB1 subfamily. As to quaternary structure, monomeric and homodimeric. The homodimer, transiently formed by two molecules on opposing membranes, is the active form mediating ER membrane fusion. Interacts with ZFYVE27; both proteins are involved in endoplasmic reticulum tubular network organization. Interacts with REEP5; both proteins are involved in endoplasmic reticulum tubular network organization.

The protein localises to the endoplasmic reticulum membrane. The catalysed reaction is GTP + H2O = GDP + phosphate + H(+). Atlastin-3 (ATL3) is a membrane-anchored GTPase that mediates the GTP-dependent fusion of endoplasmic reticulum (ER) membranes, maintaining the continuous ER network. It facilitates the formation of three-way junctions where ER tubules intersect. Two atlastin-3 on neighboring ER tubules bind GTP and form loose homodimers through the GB1/RHD3-type G domains and 3HB regions. Upon GTP hydrolysis, the 3HB regions tighten, pulling the membranes together to drive their fusion. After fusion, the homodimer disassembles upon release of inorganic phosphate (Pi). Subsequently, GDP dissociates, resetting the monomers to a conformation ready for a new fusion cycle. The sequence is that of Atlastin-3 from Rattus norvegicus (Rat).